Reading from the N-terminus, the 451-residue chain is Tubulin alpha-1 chain (451 aa).

Position 11 (Gln11) interacts with GTP. Lys40 is modified (N6-acetyllysine). GTP contacts are provided by Glu71, Gly144, Thr145, Thr179, Asn206, and Asn228. Glu71 is a binding site for Mg(2+). Residue Glu254 is part of the active site. The interval 432-451 (YEEVGADSAEGDEEDEGDEY) is disordered.

It belongs to the tubulin family. In terms of assembly, dimer of alpha and beta chains. A typical microtubule is a hollow water-filled tube with an outer diameter of 25 nm and an inner diameter of 15 nM. Alpha-beta heterodimers associate head-to-tail to form protofilaments running lengthwise along the microtubule wall with the beta-tubulin subunit facing the microtubule plus end conferring a structural polarity. Microtubules usually have 13 protofilaments but different protofilament numbers can be found in some organisms and specialized cells. It depends on Mg(2+) as a cofactor. In terms of processing, undergoes a tyrosination/detyrosination cycle, the cyclic removal and re-addition of a C-terminal tyrosine residue by the enzymes tubulin tyrosine carboxypeptidase (TTCP) and tubulin tyrosine ligase (TTL), respectively. Acetylation of alpha chains at Lys-40 stabilizes microtubules and affects affinity and processivity of microtubule motors. This modification has a role in multiple cellular functions, ranging from cell motility, cell cycle progression or cell differentiation to intracellular trafficking and signaling.

Its subcellular location is the cytoplasm. The protein resides in the cytoskeleton. It carries out the reaction GTP + H2O = GDP + phosphate + H(+). Tubulin is the major constituent of microtubules, a cylinder consisting of laterally associated linear protofilaments composed of alpha- and beta-tubulin heterodimers. Microtubules grow by the addition of GTP-tubulin dimers to the microtubule end, where a stabilizing cap forms. Below the cap, tubulin dimers are in GDP-bound state, owing to GTPase activity of alpha-tubulin. The sequence is that of Tubulin alpha-1 chain from Gossypium hirsutum (Upland cotton).